Reading from the N-terminus, the 70-residue chain is Turripeptide Lol9.1 (70 aa).

Residues 1–20 form the signal peptide; that stretch reads MKVYCLLLVLLVGLVSQAHG. The Kazal-like domain maps to 21-70; it reads KPTKRCLSVCSAEYEPVCGSDGKTYANKCHLMTEACWSPTSITLVHEGKC. 3 disulfides stabilise this stretch: Cys26–Cys56, Cys30–Cys49, and Cys38–Cys70.

Belongs to the conopeptide P-like superfamily. As to expression, expressed by the venom duct.

The protein localises to the secreted. In terms of biological role, acts as a neurotoxin by inhibiting an ion channel. May also act as a serine protease inhibitor, since it possess the kazal serine protease inhibitor signature. This is Turripeptide Lol9.1 from Iotyrris olangoensis (Sea snail).